We begin with the raw amino-acid sequence, 1029 residues long: U2 snRNP-associated SURP motif-containing protein (1029 aa).

Disordered stretches follow at residues 1–110 (MADK…KEDE) and 141–273 (VNAA…DPST). The residue at position 2 (alanine 2) is an N-acetylalanine. Polar residues predominate over residues 7–16 (GGSQKASSKN). Positions 45–54 (TRPKSPRKHN) are enriched in basic residues. The segment covering 55–64 (YRNESSRESL) has biased composition (basic and acidic residues). Serine 67 carries the phosphoserine modification. A Glycyl lysine isopeptide (Lys-Gly) (interchain with G-Cter in SUMO2) cross-link involves residue lysine 80. Residues 92–121 (AKRTLSKKEQEELKKKEDEKAAAEIYEEFL) are a coiled coil. 2 stretches are compositionally biased toward basic and acidic residues: residues 97–110 (SKKE…KEDE) and 144–155 (AKDEHETDEKRG). Glycyl lysine isopeptide (Lys-Gly) (interchain with G-Cter in SUMO2) cross-links involve residues lysine 145 and lysine 168. Over residues 169 to 178 (NPPNQSSNER) the composition is skewed to polar residues. Residues 186-222 (ETKKPPLKKGEKEKKKSNLELFKEELKQIQEERDERH) are compositionally biased toward basic and acidic residues. A coiled-coil region spans residues 192-232 (LKKGEKEKKKSNLELFKEELKQIQEERDERHKTKGRLSRFE). Serine 202 is modified (phosphoserine). Residue lysine 208 forms a Glycyl lysine isopeptide (Lys-Gly) (interchain with G-Cter in SUMO2) linkage. Serine 236 carries the post-translational modification Phosphoserine. The span at 239-249 (DGQRRSMDVPS) shows a compositional bias: basic and acidic residues. One can recognise an RRM domain in the interval 274-355 (TNLYLGNINP…FEMKLGWGKA (82 aa)). The SURP motif repeat unit spans residues 430–473 (LIHRMIEFVVREGPMFEAMIMNREINNPMFRFLFENQTPAHVYY). Serine 485 carries the post-translational modification Phosphoserine. The CID domain maps to 534 to 679 (LKEEQRDKLE…KLQNIFLGLV (146 aa)). Residues 704-729 (DGAPLEDVDGIPIDATPIDDLDGVPI) form a disordered region. Threonine 719 is subject to Phosphothreonine. Glycyl lysine isopeptide (Lys-Gly) (interchain with G-Cter in SUMO2) cross-links involve residues lysine 748 and lysine 749. Residue lysine 760 is modified to N6-acetyllysine; alternate. Lysine 760 participates in a covalent cross-link: Glycyl lysine isopeptide (Lys-Gly) (interchain with G-Cter in SUMO2); alternate. Disordered stretches follow at residues 778–841 (KWEL…EEKR) and 855–1029 (QDEL…KNKH). Residues 786-806 (EESEEEENQNQEEESEDEEDT) show a composition bias toward acidic residues. Phosphoserine is present on residues serine 788, serine 800, and serine 811. 2 stretches are compositionally biased toward basic and acidic residues: residues 810–841 (KSEE…EEKR) and 874–922 (QVEH…TPTR). Residues lysine 829 and lysine 832 each participate in a glycyl lysine isopeptide (Lys-Gly) (interchain with G-Cter in SUMO2) cross-link. A coiled-coil region spans residues 837–915 (SEEKRAKLRE…ESRSKDKKEK (79 aa)). Residue threonine 931 is modified to Phosphothreonine. A phosphoserine mark is found at serine 946 and serine 948. A compositionally biased stretch (basic and acidic residues) spans 950-980 (KSERSERSERSHKESSRSRSSHKDSPRDASK). Over residues 991-1029 (TPKRSRRSRSRSPKKSGKKSRSQSRSPHRSHKKSKKNKH) the composition is skewed to basic residues.

This sequence belongs to the splicing factor SR family. As to quaternary structure, interacts with ERBB4.

The protein localises to the nucleus. The protein is U2 snRNP-associated SURP motif-containing protein (U2surp) of Mus musculus (Mouse).